Consider the following 539-residue polypeptide: Glycerophosphoinositol inositolphosphodiesterase GDPD2 (539 aa).

Topologically, residues 1 to 38 (MAESPGCCSVWARCLHCLYSCHWRKCPRERMQTSKCDC) are cytoplasmic. A helical membrane pass occupies residues 39–59 (IWFGLLFLTFLLSLSWLYIGL). The Extracellular portion of the chain corresponds to 60–85 (VLLNDLHNFNEFLFRRWGHWMDWSLA). A helical membrane pass occupies residues 86-106 (FLLVISLLVTYASLLLVLALL). The Cytoplasmic segment spans residues 107-121 (LRLCRQPLHLHSLHK). Residues 122-142 (VLLLLIMLLVAAGLVGLDIQW) traverse the membrane as a helical segment. Residues 143 to 154 (QQEWHSLRVSLQ) lie on the Extracellular side of the membrane. The chain crosses the membrane as a helical span at residues 155 to 175 (ATAPFLHIGAAAGIALLAWPV). Over 176–188 (ADTFYRIHRRGPK) the chain is Cytoplasmic. The chain crosses the membrane as a helical span at residues 189 to 209 (ILLLLLFFGVVLVIYLAPLCI). Topologically, residues 210–490 (SSPCIMEPRD…PIWLITPQTY (281 aa)) are extracellular. Positions 224–479 (PGLVGHRGAP…NDCQLLQQMR (256 aa)) constitute a GP-PDE domain. Glutamate 256, aspartate 258, and histidine 271 together coordinate a divalent metal cation. Asparagine 442 is a glycosylation site (N-linked (GlcNAc...) asparagine). The chain crosses the membrane as a helical span at residues 491–511 (LIIWVITNCVSTMLLLWTFLL). Residues 512–539 (QRRFVKKRGKTGLETAVLLTRINNFMME) lie on the Cytoplasmic side of the membrane.

This sequence belongs to the glycerophosphoryl diester phosphodiesterase family. Ca(2+) serves as cofactor.

Its subcellular location is the cell membrane. It is found in the cytoplasm. The protein resides in the cytoskeleton. It catalyses the reaction sn-glycero-3-phospho-1D-myo-inositol + H2O = 1D-myo-inositol 1-phosphate + glycerol + H(+). Has glycerophosphoinositol inositolphosphodiesterase activity and specifically hydrolyzes glycerophosphoinositol, with no activity for other substrates such as glycerophosphoinositol 4-phosphate, glycerophosphocholine, glycerophosphoethanolamine, and glycerophosphoserine. Accelerates the program of osteoblast differentiation and growth. May play a role in remodeling of the actin cytoskeleton. This chain is Glycerophosphoinositol inositolphosphodiesterase GDPD2 (GDPD2), found in Homo sapiens (Human).